The chain runs to 407 residues: Phosphopentomutase (407 aa).

6 residues coordinate Mn(2+): Asp11, Asp305, His310, Asp346, His347, and His358.

This sequence belongs to the phosphopentomutase family. It depends on Mn(2+) as a cofactor.

It localises to the cytoplasm. It catalyses the reaction 2-deoxy-alpha-D-ribose 1-phosphate = 2-deoxy-D-ribose 5-phosphate. The catalysed reaction is alpha-D-ribose 1-phosphate = D-ribose 5-phosphate. It functions in the pathway carbohydrate degradation; 2-deoxy-D-ribose 1-phosphate degradation; D-glyceraldehyde 3-phosphate and acetaldehyde from 2-deoxy-alpha-D-ribose 1-phosphate: step 1/2. Its function is as follows. Isomerase that catalyzes the conversion of deoxy-ribose 1-phosphate (dRib-1-P) and ribose 1-phosphate (Rib-1-P) to deoxy-ribose 5-phosphate (dRib-5-P) and ribose 5-phosphate (Rib-5-P), respectively. This is Phosphopentomutase from Legionella pneumophila (strain Paris).